A 729-amino-acid polypeptide reads, in one-letter code: Anti-bacteriophage protein B (729 aa).

Positions phenylalanine 109 to serine 271 constitute a Helicase ATP-binding domain. ATP is bound at residue alanine 122–serine 129. Residues alanine 297–alanine 472 form the Helicase C-terminal domain.

The protein belongs to the helicase family. As to quaternary structure, interacts with AbpB.

In terms of biological role, part of an antiviral system composed of AbpA and AbpB; when both are expressed from a plasmid they confer resistance to phages T2, T4, T7 and lambda but not RB32 or RB69. Resistance is temperature dependent, it can be seen at 30 degrees Celsius but not at 37 or 42 degrees Celsius. The system impairs phage but not bacterial DNA synthesis (shown for T4, T7 and lambda). Partially suppressed by mutations in T4 gene 41, a replicative helicase. Its function is as follows. Deletion or mutations in this gene were selected in directed evolution experiments for resistance to intense ionizing radiation (3000 Gy). The sequence is that of Anti-bacteriophage protein B from Escherichia coli (strain K12).